The following is a 1109-amino-acid chain: DNA mismatch repair protein MSH7 (1109 aa).

Disordered stretches follow at residues 19–45 (TKGLVSGDAASGGGGSGGPRFNVKEGD) and 61–86 (DEVRGTDTPPEKVPRRVLPSGFKPAE). Basic and acidic residues predominate over residues 61–74 (DEVRGTDTPPEKVP). 853–860 (GPNMGGKS) contacts ATP.

Belongs to the DNA mismatch repair MutS family. As to quaternary structure, heterodimer consisting of MSH2-MSH7 (MutS gamma).

It is found in the nucleus. In terms of biological role, component of the post-replicative DNA mismatch repair system (MMR). Forms the heterodimer MutS gamma (MSH2-MSH7 heterodimer) which binds to DNA mismatches thereby initiating DNA repair. MutS gamma recognizes specifically the T/G single base mismatch, but not trinucleotide insertion-deletion loops (IDL). This is DNA mismatch repair protein MSH7 (MSH7) from Arabidopsis thaliana (Mouse-ear cress).